Here is a 247-residue protein sequence, read N- to C-terminus: Homeobox protein BarH-like 1b (247 aa).

Disordered stretches follow at residues 118–138 (RGKLEPGGPETGSKAKKGRRS) and 197–247 (GGGL…SQEE). A DNA-binding region (homeobox) is located at residues 135 to 194 (GRRSRTVFTELQLMGLEKRFEKQKYLSTPDRIDLAESLGLSQLQVKTWYQNRRMKWKKIV). Residues 223-234 (EQERARDAEKPP) are compositionally biased toward basic and acidic residues.

This sequence belongs to the BAR homeobox family. Interacts with serum response factor (SRF). Expressed in smooth muscle cells of the upper digestive organs and their attached arteries and to craniofacial structures.

It localises to the nucleus. Transcription factor which is involved with the serum response factor (SRF) in the smooth muscle cell-specific transcription of the beta-tropomyosin gene in the upper digestive organs and their attached arteries. In Gallus gallus (Chicken), this protein is Homeobox protein BarH-like 1b (BARX1B).